Consider the following 444-residue polypeptide: P2X purinoceptor 5 (444 aa).

Topologically, residues 1-30 are cytoplasmic; that stretch reads MGQAGCKGLCLSLFDYKTEKYVIAKNKKVG. A helical membrane pass occupies residues 31–51; it reads LLYRLLQASILAYLVVWVFLI. Over 52–319 the chain is Extracellular; sequence KKGYQDVDTS…RTLMKAYGIR (268 aa). Asparagine 77 carries an N-linked (GlcNAc...) asparagine glycan. Intrachain disulfides connect cysteine 118–cysteine 169, cysteine 129–cysteine 152, and cysteine 135–cysteine 163. Residue asparagine 202 is glycosylated (N-linked (GlcNAc...) asparagine). Disulfide bonds link cysteine 220–cysteine 229 and cysteine 263–cysteine 272. The helical transmembrane segment at 320–362 threads the bilayer; the sequence is FDVMVNGKAGKFSIIPTIINVGSGVALMGAGAFFCDLVLIYLI. Residues 363–444 are Cytoplasmic-facing; sequence KKREFYRDKK…PQLLEPHRST (82 aa). Residues 378 to 444 form a disordered region; that stretch reads GLEDSSQEAE…PQLLEPHRST (67 aa).

It belongs to the P2X receptor family. Functional P2XRs are organized as homomeric and heteromeric trimers. Homotrimer. Forms heterotrimer with P2RX1. In terms of tissue distribution, expressed at high levels in brain and immune system.

The protein localises to the cell membrane. The catalysed reaction is Na(+)(in) = Na(+)(out). It catalyses the reaction Ca(2+)(in) = Ca(2+)(out). It carries out the reaction chloride(in) = chloride(out). Activated by ATP. Slowly desensitizing. Sensitive to the ATP agonist alpha/beta-methylene-ATP. In terms of biological role, ATP-gated nonselective transmembrane cation channel permeable to potassium, sodium and calcium. Unlike other P2RX receptors, the P2X5 receptor is also permeable to chloride. May play a supporting role in the inflammatory response. Its function is as follows. Non-functional. The sequence is that of P2X purinoceptor 5 from Homo sapiens (Human).